The primary structure comprises 203 residues: Putative 3-methyladenine DNA glycosylase (203 aa).

It belongs to the DNA glycosylase MPG family.

The protein is Putative 3-methyladenine DNA glycosylase of Clostridium tetani (strain Massachusetts / E88).